The chain runs to 1822 residues: Sperm flagellar protein 2 (1822 aa).

A Calponin-homology (CH) domain is found at 1–105; the sequence is MSEILCQWLN…LLYQLYIALQ (105 aa). Coiled coils occupy residues 227–260, 321–396, 732–758, and 871–909; these read KALE…KDLQ, AHEA…KQAK, NQAQ…KAQK, and CEKV…LAEL. Disordered stretches follow at residues 896-1004, 1278-1327, 1664-1718, and 1803-1822; these read KEAE…VPQP, EEEK…EATP, SIPS…NNEK, and EHVQ…EEKK. Positions 911 to 920 are enriched in pro residues; sequence LPTPPPAPPP. 2 stretches are compositionally biased toward basic and acidic residues: residues 921–930 and 949–968; these read EPEKEKEIHQ and PHGK…ETAL. Residues 975-987 show a composition bias toward low complexity; the sequence is KGKSSGGKVPVKK. Composition is skewed to basic and acidic residues over residues 1278-1292 and 1303-1314; these read EEEK…KEKS and KEPPKKKQEDKK. Positions 1324–1676 are interaction with IFT20; that stretch reads EATPVIVTTE…SAEKTSSTDA (353 aa). Residues 1686–1712 are a coiled coil; it reads EENAAREERKLKDDTEKREQKDEEIPE. The segment covering 1688-1708 has biased composition (basic and acidic residues); the sequence is NAAREERKLKDDTEKREQKDE.

Interacts (via C-terminus) with IFT20. Interacts with DYNC1I2.

The protein resides in the cell projection. Its subcellular location is the cilium. It localises to the flagellum. It is found in the cytoplasm. The protein localises to the golgi apparatus. Functionally, required for correct axoneme development in spermatozoa. Important for normal development of the manchette and sperm head morphology. Essential for male fertility. Plays a role in localization of the intraflagellar transport protein IFT20 to the manchette, suggesting function as an adapter for dynein-mediated protein transport during spermatogenesis. Also plays a role in bone growth where it seems to be required for normal osteoblast differentiation. The polypeptide is Sperm flagellar protein 2 (SPEF2) (Homo sapiens (Human)).